We begin with the raw amino-acid sequence, 232 residues long: Phosphoglycolate phosphatase (232 aa).

The active-site Nucleophile is the aspartate 8. The Mg(2+) site is built by aspartate 8 and aspartate 10. Lysine 155 serves as a coordination point for substrate. Residues aspartate 178 and aspartate 182 each contribute to the Mg(2+) site.

The protein belongs to the archaeal SPP-like hydrolase family. Mg(2+) serves as cofactor.

It catalyses the reaction 2-phosphoglycolate + H2O = glycolate + phosphate. Catalyzes the dephosphorylation of 2-phosphoglycolate. This chain is Phosphoglycolate phosphatase, found in Methanospirillum hungatei JF-1 (strain ATCC 27890 / DSM 864 / NBRC 100397 / JF-1).